The following is a 64-amino-acid chain: Conotoxin Cal6.26 (64 aa).

The first 22 residues, 1–22, serve as a signal peptide directing secretion; it reads MKLTCVMIVAVLVLTVCKVVTS. 3 cysteine pairs are disulfide-bonded: cysteine 32/cysteine 50, cysteine 40/cysteine 54, and cysteine 49/cysteine 60.

Expressed by the venom duct.

Its subcellular location is the secreted. Functionally, probable neurotoxin. This is Conotoxin Cal6.26 from Californiconus californicus (California cone).